We begin with the raw amino-acid sequence, 240 residues long: Ubiquinone biosynthesis O-methyltransferase (240 aa).

Residues Arg-44, Gly-64, Asp-85, and Met-129 each contribute to the S-adenosyl-L-methionine site.

The protein belongs to the methyltransferase superfamily. UbiG/COQ3 family.

The enzyme catalyses a 3-demethylubiquinol + S-adenosyl-L-methionine = a ubiquinol + S-adenosyl-L-homocysteine + H(+). It catalyses the reaction a 3-(all-trans-polyprenyl)benzene-1,2-diol + S-adenosyl-L-methionine = a 2-methoxy-6-(all-trans-polyprenyl)phenol + S-adenosyl-L-homocysteine + H(+). It participates in cofactor biosynthesis; ubiquinone biosynthesis. O-methyltransferase that catalyzes the 2 O-methylation steps in the ubiquinone biosynthetic pathway. This chain is Ubiquinone biosynthesis O-methyltransferase, found in Photorhabdus laumondii subsp. laumondii (strain DSM 15139 / CIP 105565 / TT01) (Photorhabdus luminescens subsp. laumondii).